Reading from the N-terminus, the 59-residue chain is DNA-directed RNA polymerase subunit Rpo6 (59 aa).

Belongs to the archaeal Rpo6/eukaryotic RPB6 RNA polymerase subunit family. Part of the RNA polymerase complex.

Its subcellular location is the cytoplasm. The enzyme catalyses RNA(n) + a ribonucleoside 5'-triphosphate = RNA(n+1) + diphosphate. Its function is as follows. DNA-dependent RNA polymerase (RNAP) catalyzes the transcription of DNA into RNA using the four ribonucleoside triphosphates as substrates. This chain is DNA-directed RNA polymerase subunit Rpo6, found in Halorubrum lacusprofundi (strain ATCC 49239 / DSM 5036 / JCM 8891 / ACAM 34).